A 181-amino-acid chain; its full sequence is Isopentenyl-diphosphate Delta-isomerase (181 aa).

Mn(2+)-binding residues include His25 and His32. Residues 30-164 form the Nudix hydrolase domain; sequence PLHLAFSCWL…PWAFSPWMVM (135 aa). Cys67 is an active-site residue. A Mn(2+)-binding site is contributed by His69. Glu87 contributes to the Mg(2+) binding site. Residues Glu114 and Glu116 each contribute to the Mn(2+) site. Residue Glu116 is part of the active site.

The protein belongs to the IPP isomerase type 1 family. Homodimer. The cofactor is Mg(2+). Mn(2+) is required as a cofactor.

The protein localises to the cytoplasm. It carries out the reaction isopentenyl diphosphate = dimethylallyl diphosphate. Its pathway is isoprenoid biosynthesis; dimethylallyl diphosphate biosynthesis; dimethylallyl diphosphate from isopentenyl diphosphate: step 1/1. In terms of biological role, catalyzes the 1,3-allylic rearrangement of the homoallylic substrate isopentenyl (IPP) to its highly electrophilic allylic isomer, dimethylallyl diphosphate (DMAPP). The polypeptide is Isopentenyl-diphosphate Delta-isomerase (Salmonella paratyphi B (strain ATCC BAA-1250 / SPB7)).